We begin with the raw amino-acid sequence, 269 residues long: NAD kinase (269 aa).

The active-site Proton acceptor is the aspartate 62. NAD(+) contacts are provided by residues 62 to 63 (DG), 130 to 131 (NE), lysine 141, arginine 158, aspartate 160, 171 to 176 (TAYAMS), alanine 195, and glutamine 229.

The protein belongs to the NAD kinase family. Requires a divalent metal cation as cofactor.

The protein localises to the cytoplasm. It carries out the reaction NAD(+) + ATP = ADP + NADP(+) + H(+). Involved in the regulation of the intracellular balance of NAD and NADP, and is a key enzyme in the biosynthesis of NADP. Catalyzes specifically the phosphorylation on 2'-hydroxyl of the adenosine moiety of NAD to yield NADP. In Methanospirillum hungatei JF-1 (strain ATCC 27890 / DSM 864 / NBRC 100397 / JF-1), this protein is NAD kinase.